A 245-amino-acid chain; its full sequence is OCIA domain-containing protein 1 (245 aa).

Residues 1–112 (MNGRADFREP…KKLENSPLGE (112 aa)) enclose the OCIA domain. 4 positions are modified to phosphoserine: Ser-108, Ser-116, Ser-123, and Ser-191. Disordered regions lie at residues 111–141 (GEAL…VSGQ) and 169–245 (NESA…TWDE). Composition is skewed to basic and acidic residues over residues 190–210 (ESPK…RESY) and 224–238 (PMHE…KVNK).

It belongs to the OCIAD1 family. As to quaternary structure, interacts with OCIAD2. Interacts with STAT3. In terms of tissue distribution, isoform 1 is highly expressed in many tissues, including testis, brain, placenta, ovary, prostate and mammary gland. Isoform 2 expression is restricted to the central nervous system including brain, cerebellum and spinal cord.

The protein resides in the endosome. Functionally, maintains stem cell potency. Increases STAT3 phosphorylation and controls ERK phosphorylation. May act as a scaffold, increasing STAT3 recruitment onto endosomes. Involved in integrin-mediated cancer cell adhesion and colony formation in ovarian cancer. The sequence is that of OCIA domain-containing protein 1 from Homo sapiens (Human).